Reading from the N-terminus, the 158-residue chain is Transcription elongation factor GreA (158 aa).

It belongs to the GreA/GreB family.

In terms of biological role, necessary for efficient RNA polymerase transcription elongation past template-encoded arresting sites. The arresting sites in DNA have the property of trapping a certain fraction of elongating RNA polymerases that pass through, resulting in locked ternary complexes. Cleavage of the nascent transcript by cleavage factors such as GreA or GreB allows the resumption of elongation from the new 3'terminus. GreA releases sequences of 2 to 3 nucleotides. This Pelobacter propionicus (strain DSM 2379 / NBRC 103807 / OttBd1) protein is Transcription elongation factor GreA.